The primary structure comprises 44 residues: Thymosin beta (44 aa).

A disordered region spans residues 1–44 (MSDKHDKPDISEVTKFDKSKLKKTETHEKNPLPTKETIDQEKQG). Position 2 is an N-acetylserine (S2).

As to expression, expressed in regenerating axons.

The protein resides in the cytoplasm. The protein localises to the cytoskeleton. Plays an important role in the organization of the cytoskeleton. Binds to and sequesters actin monomers (G actin) and therefore inhibits actin polymerization. May be involved in the regulation of structural plasticity in the CNS. In Aplysia californica (California sea hare), this protein is Thymosin beta.